Consider the following 681-residue polypeptide: DNA ligase (681 aa).

NAD(+) is bound by residues aspartate 45–aspartate 49, serine 94–leucine 95, and glutamate 120. Lysine 122 (N6-AMP-lysine intermediate) is an active-site residue. Residues arginine 143, glutamate 177, lysine 289, and lysine 313 each contribute to the NAD(+) site. Cysteine 403, cysteine 406, cysteine 421, and cysteine 426 together coordinate Zn(2+). One can recognise a BRCT domain in the interval serine 593–isoleucine 681.

The protein belongs to the NAD-dependent DNA ligase family. LigA subfamily. Mg(2+) serves as cofactor. It depends on Mn(2+) as a cofactor.

It catalyses the reaction NAD(+) + (deoxyribonucleotide)n-3'-hydroxyl + 5'-phospho-(deoxyribonucleotide)m = (deoxyribonucleotide)n+m + AMP + beta-nicotinamide D-nucleotide.. DNA ligase that catalyzes the formation of phosphodiester linkages between 5'-phosphoryl and 3'-hydroxyl groups in double-stranded DNA using NAD as a coenzyme and as the energy source for the reaction. It is essential for DNA replication and repair of damaged DNA. The protein is DNA ligase of Leptospira borgpetersenii serovar Hardjo-bovis (strain L550).